A 377-amino-acid polypeptide reads, in one-letter code: Unsaturated glucuronyl hydrolase (377 aa).

Asp-88 acts as the Nucleophile in catalysis. The Proton donor role is filled by Asp-149.

It belongs to the glycosyl hydrolase 88 family. Monomer.

It is found in the cytoplasm. It carries out the reaction beta-D-Delta(4)-GlcA-(1-&gt;4)-beta-D-Glc-(1-&gt;4)-alpha-L-Rha-(1-&gt;3)-D-Glc + H2O = beta-D-Glc-(1-&gt;4)-alpha-L-Rha-(1-&gt;3)-D-Glc + 5-dehydro-4-deoxy-D-glucuronate. With respect to regulation, partially inhibited by divalent metal ions such as calcium, copper, iron and mercury. Catalyzes the hydrolysis of oligosaccharides with unsaturated glucuronyl residues at the non-reducing terminal, to a sugar or an amino sugar, and an unsaturated D-glucuronic acid (GlcA), which is nonenzymatically converted immediately to alpha-keto acid. This is Unsaturated glucuronyl hydrolase (ugl) from Bacillus sp. (strain GL1).